The primary structure comprises 159 residues: MTSRLARLWQPGNPQRRVFLPDFWMAVIESPSVGRNKLPRNCVKFEVDPRMSRHDIREYLTKIYDLPVRDVRTEVQMGDITWNTKLDHQYKKAMWKEEDKKIAYVFMSKDFAFSFPQMFAASEEVVELAKMTKQQEELKEKLNEQYANRNRRVGQFLAA.

This sequence belongs to the universal ribosomal protein uL23 family. As to quaternary structure, component of the mitochondrial ribosome large subunit (39S) which comprises a 16S rRNA and about 50 distinct proteins.

The protein resides in the mitochondrion. The polypeptide is Large ribosomal subunit protein uL23m (mrpl-23) (Caenorhabditis briggsae).